A 363-amino-acid polypeptide reads, in one-letter code: Phosphoserine aminotransferase (363 aa).

An L-glutamate-binding site is contributed by Arg-42. Residues 76 to 77, Trp-102, Thr-156, Asp-175, and Gln-198 each bind pyridoxal 5'-phosphate; that span reads GR. An N6-(pyridoxal phosphate)lysine modification is found at Lys-199. A pyridoxal 5'-phosphate-binding site is contributed by 240–241; that stretch reads NT.

This sequence belongs to the class-V pyridoxal-phosphate-dependent aminotransferase family. SerC subfamily. Homodimer. It depends on pyridoxal 5'-phosphate as a cofactor.

The protein resides in the cytoplasm. It carries out the reaction O-phospho-L-serine + 2-oxoglutarate = 3-phosphooxypyruvate + L-glutamate. The catalysed reaction is 4-(phosphooxy)-L-threonine + 2-oxoglutarate = (R)-3-hydroxy-2-oxo-4-phosphooxybutanoate + L-glutamate. It functions in the pathway amino-acid biosynthesis; L-serine biosynthesis; L-serine from 3-phospho-D-glycerate: step 2/3. It participates in cofactor biosynthesis; pyridoxine 5'-phosphate biosynthesis; pyridoxine 5'-phosphate from D-erythrose 4-phosphate: step 3/5. Its function is as follows. Catalyzes the reversible conversion of 3-phosphohydroxypyruvate to phosphoserine and of 3-hydroxy-2-oxo-4-phosphonooxybutanoate to phosphohydroxythreonine. This Shewanella baltica (strain OS155 / ATCC BAA-1091) protein is Phosphoserine aminotransferase.